Reading from the N-terminus, the 564-residue chain is MTMTLLSYLSSLCREATLSAFPQIDTFSPDITQSTKEHFGHYQCNDAMKLARTLKMAPRAIAEAIVNHIPKEIFTSIEIAGAGFINFTFSKEFLNNSLKTFSEELSSGFRVKDPKKVVIDFSSPNIAKDMHVGHLRSTIIGDCLARVFAFVGNDVSRLNHIGDWGTAFGMLITYLQEEPSEDIENLEDLTVLYKKAHARFAEDAEFKKRSQTNVVALQAGDPSALKLWKQICAISERAFQKIYNILDIAIEKRGESFYNPFLPEIIQDLENKNLITISDNAKCVFHEGFSIPLMVQKSDGGYNYATTDLAAMRYRVNNDGADKIIIVTDMGQSLHFQLLEATALAAGYLPNKETFSHVGFGLVLDSEGKKFKTRSGENIKLKELLDTAIDQAKATLKEHRPEISDEEISSRAPILGINAIKYADLSSHRVSDYIFSFEKMLRFEGNTAMFLLYAYVRIQGIKRRLGIETLDLEATPNIQEPSEEALALALLRFPEAIDLTLKDLCPHFLTDYLYMLTNKFNAFFRDCHIEGSSHQKERLYLCALVEKTLAAGMHLLGLQTLDKL.

The 'HIGH' region signature appears at P124–H134.

This sequence belongs to the class-I aminoacyl-tRNA synthetase family. In terms of assembly, monomer.

It localises to the cytoplasm. The enzyme catalyses tRNA(Arg) + L-arginine + ATP = L-arginyl-tRNA(Arg) + AMP + diphosphate. In Chlamydia caviae (strain ATCC VR-813 / DSM 19441 / 03DC25 / GPIC) (Chlamydophila caviae), this protein is Arginine--tRNA ligase.